The following is a 161-amino-acid chain: RNA pyrophosphohydrolase (161 aa).

Residues proline 12–lysine 154 form the Nudix hydrolase domain. The Nudix box motif lies at glycine 46–glycine 67.

This sequence belongs to the Nudix hydrolase family. RppH subfamily. It depends on a divalent metal cation as a cofactor.

Accelerates the degradation of transcripts by removing pyrophosphate from the 5'-end of triphosphorylated RNA, leading to a more labile monophosphorylated state that can stimulate subsequent ribonuclease cleavage. The sequence is that of RNA pyrophosphohydrolase from Rickettsia peacockii (strain Rustic).